A 676-amino-acid polypeptide reads, in one-letter code: MSSLQALCSGLPLRPLPENRGRQAGVPHAPVRTPSLSPVEKQLALRNALRYFPPDVQELLAPEFAQELQLYGHIYMYRFCPDIEMRAYPIEQYPCQTKVAAAIMHMIMNNLDPAVAQFPQELVTYGGNGQVFSNWAQFWLTMFYLSKMTEEQTLVMYSGHPLGLFPSSRSAPRLVITNGMVIPNYSSRTEYEKLFALGVTMYGQMTAGSYCYIGPQGIVHGTVLTVLNAARRYLGIEDLAGKVFVTSGLGGMSGAQAKAAVIVGCIGVIAEVDKAALEKRHRQGWLMEVTDSLDRCIQRLREARKKKEVLSLGYHGNVVALWERLVHELDTTGECLVDLGSDQTSCHNPFNGGYYPVQLSFTEAQSLMASNPAVFKDLVQESLRRQVSAINRLAEEKFFFWDYGNAFLLEAQRAGADVEKKGAGRTEFRYPSYVQHIMGDIFSQGFGPFRWVCTSGDPQDLAVTDELATSVLEEAIADGVKVSVKLQYMDNIRWIREAARHRLVVGSQARILYSDQKGRVAIAVAINQAIACRRIKAPVVLSRDHHDVSGTDSPFRETSNIYDGSAFCADMAVQNFVGDACRGATWVALHNGGGVGWGEVINGGFGLVLDGTPEAEGRARLMLSWDVSNGVARRCWSGNQKAYEIICQTMQENSTLVVTLPHKVEDERVLQQALQL.

The interval 15–35 (PLPENRGRQAGVPHAPVRTPS) is disordered. NAD(+) contacts are provided by residues 126-127 (GG), Gln-204, 251-253 (GMS), Glu-271, 317-318 (NV), 343-347 (QTSCH), 354-355 (YY), Tyr-403, and Gly-594.

Belongs to the urocanase family. Requires NAD(+) as cofactor.

It catalyses the reaction 4-imidazolone-5-propanoate = trans-urocanate + H2O. The protein operates within amino-acid degradation; L-histidine degradation into L-glutamate; N-formimidoyl-L-glutamate from L-histidine: step 2/3. This is Urocanate hydratase (UROC1) from Homo sapiens (Human).